The following is a 157-amino-acid chain: Protein Smg homolog (157 aa).

It belongs to the Smg family.

This chain is Protein Smg homolog, found in Xanthomonas euvesicatoria pv. vesicatoria (strain 85-10) (Xanthomonas campestris pv. vesicatoria).